The following is a 91-amino-acid chain: Small ribosomal subunit protein uS15c (91 aa).

The protein belongs to the universal ribosomal protein uS15 family. Part of the 30S ribosomal subunit.

It localises to the plastid. The protein localises to the chloroplast. This is Small ribosomal subunit protein uS15c (rps15) from Ceratophyllum demersum (Rigid hornwort).